Consider the following 285-residue polypeptide: N(G),N(G)-dimethylarginine dimethylaminohydrolase 1 (285 aa).

Ala2 carries the N-acetylalanine modification. Position 30 (Leu30) interacts with substrate. Position 33 is a phosphoserine (Ser33). Substrate-binding residues include Asp73, Glu78, Asp79, Arg98, and Arg145. The Proton donor role is filled by His173. Cys222 is modified (S-nitrosocysteine). Val268 is a binding site for substrate. Cys274 is subject to S-nitrosocysteine. The active-site Nucleophile is the Cys274. Zn(2+) is bound at residue Cys274.

This sequence belongs to the DDAH family. In terms of assembly, monomer. In terms of tissue distribution, detected in red blood cells (at protein level). Widely distributed, high amounts found in kidney, brain, aorta and pancreas.

The enzyme catalyses N(omega),N(omega)-dimethyl-L-arginine + H2O = dimethylamine + L-citrulline. It catalyses the reaction N(omega)-methyl-L-arginine + H2O = L-citrulline + methylamine. Inhibited by zinc ions. Its function is as follows. Hydrolyzes N(G),N(G)-dimethyl-L-arginine (ADMA) and N(G)-monomethyl-L-arginine (MMA) which act as inhibitors of NOS. Has therefore a role in the regulation of nitric oxide generation. The polypeptide is N(G),N(G)-dimethylarginine dimethylaminohydrolase 1 (Ddah1) (Rattus norvegicus (Rat)).